The following is a 404-amino-acid chain: Cysteine desulfurase IscS (404 aa).

Pyridoxal 5'-phosphate contacts are provided by residues 75–76 (AT), Asn-155, Gln-183, and 203–205 (SAH). At Lys-206 the chain carries N6-(pyridoxal phosphate)lysine. A pyridoxal 5'-phosphate-binding site is contributed by Thr-243. Cys-328 (cysteine persulfide intermediate) is an active-site residue. Residue Cys-328 participates in [2Fe-2S] cluster binding.

This sequence belongs to the class-V pyridoxal-phosphate-dependent aminotransferase family. NifS/IscS subfamily. Homodimer. Forms a heterotetramer with IscU, interacts with other sulfur acceptors. Pyridoxal 5'-phosphate is required as a cofactor.

The protein localises to the cytoplasm. It catalyses the reaction (sulfur carrier)-H + L-cysteine = (sulfur carrier)-SH + L-alanine. It functions in the pathway cofactor biosynthesis; iron-sulfur cluster biosynthesis. Master enzyme that delivers sulfur to a number of partners involved in Fe-S cluster assembly, tRNA modification or cofactor biosynthesis. Catalyzes the removal of elemental sulfur atoms from cysteine to produce alanine. Functions as a sulfur delivery protein for Fe-S cluster synthesis onto IscU, an Fe-S scaffold assembly protein, as well as other S acceptor proteins. The sequence is that of Cysteine desulfurase IscS from Stutzerimonas stutzeri (strain A1501) (Pseudomonas stutzeri).